The sequence spans 402 residues: MNVEHNTVSLGEFEFDCGETIPELEITYEAYGEFDGDNAVLVCHALTGSAHVAGRDRVDSADQARAWWDDIVGPGKAIDTTEYYVVCANVPGSCYGSTGPKSENPETGEPYGTDFPPVTVTDWTEAQRALLDELGIPHLHAVVGGSVGGMNVIEWAKRHPDHVDRIVPIAAAARLDTQCLSLDAIARRAITTDPNWKQGHYYGEDDEPPSDGLALARQLGHVMYLSKASMERRFGRRAAGRDAVRTFPTDAAGAFFPYRDVESYLDYNAEKFTERFDANSYLYLTRAMDNYDLAAGFESDADALAAFDGDALVMSFTADWHFTTQQAEALADSLRAADANVAHHVIDSDHGHDAFLVEPDNVGPPLADFLDAGVDGNAVTDSVVEDSQESNFAPVHNSLFSQ.

In terms of domain architecture, AB hydrolase-1 spans 38 to 359 (NAVLVCHALT…HGHDAFLVEP (322 aa)). The active-site Nucleophile is serine 146. A substrate-binding site is contributed by arginine 217. Residues aspartate 319 and histidine 352 contribute to the active site. Substrate is bound at residue aspartate 353.

The protein belongs to the AB hydrolase superfamily. MetX family. In terms of assembly, homodimer.

It is found in the cytoplasm. It carries out the reaction L-homoserine + acetyl-CoA = O-acetyl-L-homoserine + CoA. Its pathway is amino-acid biosynthesis; L-methionine biosynthesis via de novo pathway; O-acetyl-L-homoserine from L-homoserine: step 1/1. Functionally, transfers an acetyl group from acetyl-CoA to L-homoserine, forming acetyl-L-homoserine. In Haloarcula marismortui (strain ATCC 43049 / DSM 3752 / JCM 8966 / VKM B-1809) (Halobacterium marismortui), this protein is Homoserine O-acetyltransferase.